Consider the following 271-residue polypeptide: Nuclear egress protein 2 (271 aa).

The Perinuclear space segment spans residues 1–249; that stretch reads MSVVGKRVVD…LGRAVALVRR (249 aa). The helical transmembrane segment at 250–267 threads the bilayer; that stretch reads SWPWISAGIAFLCLGLVW. Residues 268–271 lie on the Nuclear side of the membrane; sequence MRPS.

The protein belongs to the herpesviridae NEC2 protein family. In terms of assembly, forms a heterohexameric complex with NEC1. Phosphorylated.

It is found in the host nucleus inner membrane. Plays an essential role in virion nuclear egress, the first step of virion release from infected cell. Within the host nucleus, NEC1 interacts with the newly formed capsid through the vertexes and directs it to the inner nuclear membrane by associating with NEC2. Induces the budding of the capsid at the inner nuclear membrane as well as its envelopment into the perinuclear space. There, the NEC1/NEC2 complex promotes the fusion of the enveloped capsid with the outer nuclear membrane and the subsequent release of the viral capsid into the cytoplasm where it will reach the secondary budding sites in the host Golgi or trans-Golgi network. The sequence is that of Nuclear egress protein 2 from Homo sapiens (Human).